The primary structure comprises 298 residues: tRNA-uridine aminocarboxypropyltransferase 2 (298 aa).

Met-1 is subject to N-acetylmethionine. The tract at residues 1 to 52 (MESQKEARILQEPVARPPGASRSQTPNAKERQEGGPVPAAAALGAEADDDSA) is disordered. Ser-132 carries the phosphoserine modification. Residues 178–181 (DGTW) carry the DXTW motif.

The protein belongs to the TDD superfamily. DTWD2 family.

The protein localises to the nucleus. It is found in the cytoplasm. The catalysed reaction is a uridine in tRNA + S-adenosyl-L-methionine = a 3-[(3S)-3-amino-3-carboxypropyl]uridine in tRNA + S-methyl-5'-thioadenosine + H(+). In terms of biological role, catalyzes the formation of 3-(3-amino-3-carboxypropyl)uridine (acp3U) at position 20a in the D-loop of several cytoplasmic tRNAs (acp3U(20a)). Also has a weak activity to form acp3U at position 20 in the D-loop of tRNAs (acp3U(20)). Involved in glycoRNA biosynthesis by mediating formation of acp3U, which acts as an attachment site for N-glycans on tRNAs. GlycoRNAs consist of RNAs modified with secretory N-glycans that are presented on the cell surface. The sequence is that of tRNA-uridine aminocarboxypropyltransferase 2 from Macaca fascicularis (Crab-eating macaque).